The primary structure comprises 162 residues: Large ribosomal subunit protein uL10 (162 aa).

Belongs to the universal ribosomal protein uL10 family. In terms of assembly, part of the ribosomal stalk of the 50S ribosomal subunit. The N-terminus interacts with L11 and the large rRNA to form the base of the stalk. The C-terminus forms an elongated spine to which L12 dimers bind in a sequential fashion forming a multimeric L10(L12)X complex.

Its function is as follows. Forms part of the ribosomal stalk, playing a central role in the interaction of the ribosome with GTP-bound translation factors. The chain is Large ribosomal subunit protein uL10 from Borrelia garinii subsp. bavariensis (strain ATCC BAA-2496 / DSM 23469 / PBi) (Borreliella bavariensis).